A 340-amino-acid polypeptide reads, in one-letter code: DnaJ homolog subfamily C member 22 (340 aa).

The 50-residue stretch at 1-50 folds into the TM2 domain; that stretch reads MGKSLLAAYGLWALGGPLGLYHIYLGRDSHALLWMLTLGGFGMGWMWDFW. The next 7 helical transmembrane spans lie at 5–25, 30–50, 81–101, 105–125, 135–155, 186–206, and 212–232; these read LLAA…HIYL, HALL…WDFW, FIGQ…GLSF, FHMV…ATVG, LIAA…MIPI, IGLV…LNTS, and VAGS…ISAL. Residues 278–340 enclose the J domain; it reads MACKVLGVNF…LMRLRKSKTL (63 aa).

It localises to the membrane. May function as a co-chaperone. The polypeptide is DnaJ homolog subfamily C member 22 (dnajc22) (Xenopus tropicalis (Western clawed frog)).